The primary structure comprises 101 residues: Protein PrgJ (101 aa).

To S.flexneri MxiI.

Its function is as follows. Required for invasion of epithelial cells. The polypeptide is Protein PrgJ (prgJ) (Salmonella typhimurium (strain LT2 / SGSC1412 / ATCC 700720)).